The sequence spans 102 residues: Large ribosomal subunit protein bL28 (102 aa).

The protein belongs to the bacterial ribosomal protein bL28 family.

The polypeptide is Large ribosomal subunit protein bL28 (Bradyrhizobium diazoefficiens (strain JCM 10833 / BCRC 13528 / IAM 13628 / NBRC 14792 / USDA 110)).